Consider the following 289-residue polypeptide: Ribosomal protein L11 methyltransferase (289 aa).

S-adenosyl-L-methionine is bound by residues threonine 135, glycine 156, aspartate 179, and asparagine 225.

The protein belongs to the methyltransferase superfamily. PrmA family.

Its subcellular location is the cytoplasm. The enzyme catalyses L-lysyl-[protein] + 3 S-adenosyl-L-methionine = N(6),N(6),N(6)-trimethyl-L-lysyl-[protein] + 3 S-adenosyl-L-homocysteine + 3 H(+). Its function is as follows. Methylates ribosomal protein L11. In Chlorobaculum tepidum (strain ATCC 49652 / DSM 12025 / NBRC 103806 / TLS) (Chlorobium tepidum), this protein is Ribosomal protein L11 methyltransferase.